We begin with the raw amino-acid sequence, 137 residues long: Gonadotropin subunit beta-1 (137 aa).

The first 24 residues, 1-24, serve as a signal peptide directing secretion; sequence MYCTHLRMLQLVVMATLWVTPVRA. 5 disulfide bridges follow: Cys32/Cys78, Cys46/Cys93, Cys55/Cys108, Cys59/Cys110, and Cys113/Cys120. Asn36 is a glycosylation site (N-linked (GlcNAc...) asparagine).

Belongs to the glycoprotein hormones subunit beta family. In terms of assembly, heterodimer of an alpha and a beta chain.

It localises to the secreted. Functionally, involved in gametogenesis and steroidogenesis. In Coregonus autumnalis (Arctic cisco), this protein is Gonadotropin subunit beta-1 (cgba).